Reading from the N-terminus, the 325-residue chain is Large ribosomal subunit protein uL1m (325 aa).

The transit peptide at 1 to 50 directs the protein to the mitochondrion; the sequence is MAATVRCFGRVLIHHQRCSLATVTSQTSLYPCCIYVPVPNRHFAAAAKPA. Residues 47–66 are disordered; that stretch reads AKPAKKTKKGTKEKASNEKK. Over residues 56-66 the composition is skewed to basic and acidic residues; it reads GTKEKASNEKK.

Belongs to the universal ribosomal protein uL1 family.

Its subcellular location is the mitochondrion. This is Large ribosomal subunit protein uL1m (MRPL1) from Bos taurus (Bovine).